Here is a 139-residue protein sequence, read N- to C-terminus: FLYWCH family member 2 (139 aa).

Disordered regions lie at residues 1–36 (MPQPKPSEQEGESMKASQEPAPQPGTDVVPAAPRKP) and 86–139 (EAQR…STSP). The span at 98-107 (PEQKRSKQNL) shows a compositional bias: basic and acidic residues. Residues 120–130 (VSSSSSEETTV) show a composition bias toward low complexity.

In Mus musculus (Mouse), this protein is FLYWCH family member 2 (Flywch2).